A 418-amino-acid polypeptide reads, in one-letter code: Light-independent protochlorophyllide reductase subunit N (418 aa).

Residues cysteine 17, cysteine 42, and cysteine 103 each coordinate [4Fe-4S] cluster.

The protein belongs to the BchN/ChlN family. In terms of assembly, protochlorophyllide reductase is composed of three subunits; ChlL, ChlN and ChlB. Forms a heterotetramer of two ChlB and two ChlN subunits. The cofactor is [4Fe-4S] cluster.

The enzyme catalyses chlorophyllide a + oxidized 2[4Fe-4S]-[ferredoxin] + 2 ADP + 2 phosphate = protochlorophyllide a + reduced 2[4Fe-4S]-[ferredoxin] + 2 ATP + 2 H2O. It participates in porphyrin-containing compound metabolism; chlorophyll biosynthesis (light-independent). Functionally, component of the dark-operative protochlorophyllide reductase (DPOR) that uses Mg-ATP and reduced ferredoxin to reduce ring D of protochlorophyllide (Pchlide) to form chlorophyllide a (Chlide). This reaction is light-independent. The NB-protein (ChlN-ChlB) is the catalytic component of the complex. The sequence is that of Light-independent protochlorophyllide reductase subunit N from Prochlorococcus marinus subsp. pastoris (strain CCMP1986 / NIES-2087 / MED4).